The sequence spans 212 residues: MLYFESLKDKFKLNKKQLNKFVFYYEFLKKENQKMNLTSLISLSDVCYKHFYDSLILKEIFDFNNVTNLCDVGSGAGFPSFPLKILYPHLKIIIIESSLKKINFLKQLASHLELDNVCFFHKRVEQHDIAKNGSYDFVVARALARLEIILKWCVPLVKKRGYFIAMKGKNFQQELEASKKIIKQMKVKLVSAKVFELPMQLGTRTNLLFQTE.

Residues Gly73, Phe78, 96–98 (ESS), 124–125 (VE), and Arg141 each bind S-adenosyl-L-methionine.

This sequence belongs to the methyltransferase superfamily. RNA methyltransferase RsmG family.

The protein resides in the cytoplasm. Its function is as follows. Specifically methylates the N7 position of a guanine in 16S rRNA. The sequence is that of Ribosomal RNA small subunit methyltransferase G from Aster yellows witches'-broom phytoplasma (strain AYWB).